Reading from the N-terminus, the 1460-residue chain is Venom prothrombin activator pseutarin-C non-catalytic subunit (1460 aa).

An N-terminal signal peptide occupies residues 1–30; it reads MGRYSVSPVPKCLLLMFLGWSGLKYYQVNA. A Plastocyanin-like 1 domain is found at 32-196; it reads QLREYHIAAQ…SGLIGALLIC (165 aa). 2 F5/8 type A domains span residues 32–330 and 351–685; these read QLRE…LNIK and KNWE…FLDA. Ca(2+) is bound by residues K124, E139, D142, and D143. N-linked (GlcNAc...) asparagine glycosylation occurs at N156. C170 and C196 form a disulfide bridge. N-linked (GlcNAc...) asparagine glycosylation is found at N204 and N242. 3 Plastocyanin-like domains span residues 206-330, 351-529, and 539-685; these read SQKF…LNIK, KNWE…LLVC, and VQNK…FLDA. C251 and C332 are disulfide-bonded. N-linked (GlcNAc...) asparagine glycans are attached at residues N406 and N471. C503 and C529 are disulfide-bonded. N-linked (GlcNAc...) asparagine glycosylation is present at N557. 4 disulfide bridges follow: C672–C1032, C966–C992, C1147–C1298, and C1303–C1457. The interval 693–818 is b; sequence GNEEEEEDDG…PDDIAGRYLR (126 aa). Residues 773–818 constitute a propeptide, activation peptide (connecting region); sequence SFKGSVAEEELKHTALALEEDAHASDPRIDSNSARNPDDIAGRYLR. 2 Plastocyanin-like domains span residues 824–992 and 1001–1143; these read NKRR…ILIC and NRTI…FTVI. Residues 824–1143 enclose the F5/8 type A 3 domain; it reads NKRRYYIAAE…RGMQALFTVI (320 aa). Residues K920, F935, D938, and D939 each coordinate Ca(2+). A glycan (N-linked (GlcNAc...) asparagine) is linked at N944. N-linked (GlcNAc...) asparagine glycosylation is found at N1001 and N1180. 2 consecutive F5/8 type C domains span residues 1147-1298 and 1303-1457; these read CKLP…LLGC and CSVP…LFGC.

It belongs to the multicopper oxidase family. As to quaternary structure, heterodimer of a light and a heavy chains; non-disulfide-linked. The interaction between the two chains is calcium-dependent. Found in its active form associated with pseutarin-C catalytic subunit (AC Q56VR3). In terms of processing, in physiological conditions, blood coagulation factor V and factor Va are inactivated by activated protein C (APC) through proteolytic degradation of the heavy chain. However, pseutarin-C non-catalytic subunit (factor V-like protein) retains its full activity even at high concentration of APC. This has two explanations: this protein has only one of the three cleavage sites present in factor V that are targeted by the APC for inactivation, and the binding with the catalytic subunit protect the cleavage site from inactivation. As to expression, expressed by the venom gland.

The protein resides in the secreted. Functionally, snake prothrombin activator that attacks the hemostatic system of prey. This non-catalytic subunit is functionally similar to blood coagulation factor V. It serves as a critical cofactor for the prothrombinase activity of the catalytic subunit, which is similar to the blood coagulation factor X. The complex converts prothrombin to thrombin by sequential cleavage at two positions, Arg-320 followed by Arg-271. Cleavage at Arg-320 produces an active intermediate known as meizothrombin. Meizothrombin is the 'second' substrate for prothrombinase, and it docks in an altered manner to present the second cleavage site (271). Cleavage at Arg-271 releases active thrombin from its pro-fragment. This order of events is reversed if the protease component of prothrombinase is used on its own, suggesting that the 271 site is inherently more accessible to proteolysis. The complex converts prothrombin to thrombin in presence but also in the absence of membrane. This is Venom prothrombin activator pseutarin-C non-catalytic subunit from Pseudonaja textilis (Eastern brown snake).